We begin with the raw amino-acid sequence, 485 residues long: Glutamate mutase epsilon subunit (485 aa).

Arg66 lines the L-glutamate pocket. Gly68 is an adenosylcob(III)alamin binding site. Arg100 contributes to the L-glutamate binding site. Asn123 lines the adenosylcob(III)alamin pocket. L-glutamate-binding positions include 149 to 150, Glu171, and Tyr177; that span reads RH. Position 180 (Pro180) interacts with adenosylcob(III)alamin. Tyr181 contributes to the L-glutamate binding site. Residues Phe297, Lys326, Glu330, and Ile334 each contribute to the adenosylcob(III)alamin site.

Belongs to the methylaspartate mutase GlmE subunit family. In terms of assembly, heterotetramer composed of 2 epsilon subunits (GlmE) and 2 sigma subunits (GlmS). GlmE exists as a homodimer and GlmS as a monomer. Adenosylcob(III)alamin is required as a cofactor.

The enzyme catalyses (2S,3S)-3-methyl-L-aspartate = L-glutamate. The protein operates within amino-acid degradation; L-glutamate degradation via mesaconate pathway; acetate and pyruvate from L-glutamate: step 1/4. Catalyzes the carbon skeleton rearrangement of L-glutamate to L-threo-3-methylaspartate ((2S,3S)-3-methylaspartate). This is Glutamate mutase epsilon subunit from Treponema denticola (strain ATCC 35405 / DSM 14222 / CIP 103919 / JCM 8153 / KCTC 15104).